We begin with the raw amino-acid sequence, 685 residues long: Translation factor GUF1 homolog, mitochondrial (685 aa).

The transit peptide at 1–54 directs the protein to the mitochondrion; the sequence is MFSRLLNRGNGGVNKNITSGLLLRRTTTTTTRLSYINNSPTLSIRSFCSKSTTI. The 200-residue stretch at 68-267 folds into the tr-type G domain; sequence DRIRNFSIIA…AVIDRIPPPQ (200 aa). Residues 77 to 84, 160 to 164, and 214 to 217 each bind GTP; these read AHIDHGKT, DTPGH, and NKID.

The protein belongs to the TRAFAC class translation factor GTPase superfamily. Classic translation factor GTPase family. LepA subfamily.

It localises to the mitochondrion inner membrane. The enzyme catalyses GTP + H2O = GDP + phosphate + H(+). In terms of biological role, promotes mitochondrial protein synthesis. May act as a fidelity factor of the translation reaction, by catalyzing a one-codon backward translocation of tRNAs on improperly translocated ribosomes. Binds to mitochondrial ribosomes in a GTP-dependent manner. In Dictyostelium discoideum (Social amoeba), this protein is Translation factor GUF1 homolog, mitochondrial (guf1).